A 280-amino-acid chain; its full sequence is Beta-glucosyl-HMC-alpha-glucosyl-transferase (280 aa).

Its pathway is genetic information processing; DNA modification. In terms of biological role, transfers a gentiobiosyl-group on a hydroxymethylcytosine residue in DNA. Is involved in a DNA modification process to protects the phage genome against its own nucleases and the host restriction endonuclease system. The chain is Beta-glucosyl-HMC-alpha-glucosyl-transferase from Enterobacteria phage T2 (Bacteriophage T2).